A 314-amino-acid chain; its full sequence is 4-hydroxy-3-methylbut-2-enyl diphosphate reductase (314 aa).

C12 lines the [4Fe-4S] cluster pocket. 2 residues coordinate (2E)-4-hydroxy-3-methylbut-2-enyl diphosphate: H41 and H74. Dimethylallyl diphosphate-binding residues include H41 and H74. 2 residues coordinate isopentenyl diphosphate: H41 and H74. C96 contributes to the [4Fe-4S] cluster binding site. Residue H124 coordinates (2E)-4-hydroxy-3-methylbut-2-enyl diphosphate. Residue H124 coordinates dimethylallyl diphosphate. Position 124 (H124) interacts with isopentenyl diphosphate. Catalysis depends on E126, which acts as the Proton donor. T167 is a binding site for (2E)-4-hydroxy-3-methylbut-2-enyl diphosphate. Residue C197 participates in [4Fe-4S] cluster binding. (2E)-4-hydroxy-3-methylbut-2-enyl diphosphate is bound by residues S225, S226, N227, and S269. Dimethylallyl diphosphate is bound by residues S225, S226, N227, and S269. Residues S225, S226, N227, and S269 each contribute to the isopentenyl diphosphate site.

The protein belongs to the IspH family. Requires [4Fe-4S] cluster as cofactor.

It carries out the reaction isopentenyl diphosphate + 2 oxidized [2Fe-2S]-[ferredoxin] + H2O = (2E)-4-hydroxy-3-methylbut-2-enyl diphosphate + 2 reduced [2Fe-2S]-[ferredoxin] + 2 H(+). It catalyses the reaction dimethylallyl diphosphate + 2 oxidized [2Fe-2S]-[ferredoxin] + H2O = (2E)-4-hydroxy-3-methylbut-2-enyl diphosphate + 2 reduced [2Fe-2S]-[ferredoxin] + 2 H(+). It functions in the pathway isoprenoid biosynthesis; dimethylallyl diphosphate biosynthesis; dimethylallyl diphosphate from (2E)-4-hydroxy-3-methylbutenyl diphosphate: step 1/1. The protein operates within isoprenoid biosynthesis; isopentenyl diphosphate biosynthesis via DXP pathway; isopentenyl diphosphate from 1-deoxy-D-xylulose 5-phosphate: step 6/6. Functionally, catalyzes the conversion of 1-hydroxy-2-methyl-2-(E)-butenyl 4-diphosphate (HMBPP) into a mixture of isopentenyl diphosphate (IPP) and dimethylallyl diphosphate (DMAPP). Acts in the terminal step of the DOXP/MEP pathway for isoprenoid precursor biosynthesis. The protein is 4-hydroxy-3-methylbut-2-enyl diphosphate reductase of Idiomarina loihiensis (strain ATCC BAA-735 / DSM 15497 / L2-TR).